Reading from the N-terminus, the 1356-residue chain is DNA-directed RNA polymerase subunit beta (1356 aa).

Belongs to the RNA polymerase beta chain family. As to quaternary structure, the RNAP catalytic core consists of 2 alpha, 1 beta, 1 beta' and 1 omega subunit. When a sigma factor is associated with the core the holoenzyme is formed, which can initiate transcription.

It catalyses the reaction RNA(n) + a ribonucleoside 5'-triphosphate = RNA(n+1) + diphosphate. Functionally, DNA-dependent RNA polymerase catalyzes the transcription of DNA into RNA using the four ribonucleoside triphosphates as substrates. In Phenylobacterium zucineum (strain HLK1), this protein is DNA-directed RNA polymerase subunit beta.